The primary structure comprises 1126 residues: Formin-B (1126 aa).

The segment at 1–21 (MFFKGKKKDKEKEKSHGNIGN) is disordered. Residues 38 to 406 (EQNLSNEDLK…LILKDPSKES (369 aa)) form the GBD/FH3 domain. The segment covering 427–447 (LNNSNNNNNNNNSNNNNNDSN) has biased composition (low complexity). The disordered stretch occupies residues 427–462 (LNNSNNNNNNNNSNNNNNDSNVSTPNINTGSPLLPP). Polar residues predominate over residues 448–462 (VSTPNINTGSPLLPP). Residues 463-514 (QQYQDLEQKLQLTQNEKNESQNKVKQLESEIKGLNSTLTGLQLKVTKLEADL) adopt a coiled-coil conformation. The span at 518 to 532 (SVTTPPSDTNGTTSP) shows a compositional bias: polar residues. 2 disordered regions span residues 518–619 (SVTT…SVPS) and 1004–1078 (ARKK…QNGT). Residues 527–611 (NGTTSPPIEA…PGAPAVPNLP (85 aa)) form the FH1 domain. Residues 543-597 (GAPPPPPPPPPAPPVSGGGPPPPPPPPPPSSGGGPPPPPPPPSSGGPPPPPPPPG) are compositionally biased toward pro residues. 3 stretches are compositionally biased toward low complexity: residues 598–607 (GMKKPGAPAV), 1009–1022 (AASGPSVPSASGSS), and 1032–1064 (SPITPTSKSSISISQKPPQSTQPSISVQQQQQQ). The 400-residue stretch at 612 to 1011 (PKKSSVPSVK…LAARKKAAAS (400 aa)) folds into the FH2 domain. Positions 980 to 1010 (KFKNEFKRTIESIQKERENVQKLAARKKAAA) form a coiled coil. In terms of domain architecture, DAD spans 1071-1100 (DDIPQNGTFMDQLMSKMKGGEAIRASRRAS).

This sequence belongs to the formin homology family. Diaphanous subfamily. Interacts (via GBD/FH3 domain) with activated Rho-GTPases. Interacts with pfyA and pfyB.

Its function is as follows. Formins play an important role in the nucleation of actin and the formation of linear actin filaments. This Dictyostelium discoideum (Social amoeba) protein is Formin-B (forB).